Reading from the N-terminus, the 186-residue chain is UPF0461 protein C5orf24 homolog (186 aa).

The segment covering 60–69 (NETHLQTSTS) has biased composition (polar residues). Residues 60–140 (NETHLQTSTS…AAGYKVSPGR (81 aa)) form a disordered region. The span at 78–92 (LKKKKNLGRSGKRGR) shows a compositional bias: basic residues. Residues 94–107 (SGTTKSAGYRTSTG) show a composition bias toward polar residues.

Belongs to the UPF0461 family.

This is UPF0461 protein C5orf24 homolog from Xenopus tropicalis (Western clawed frog).